Reading from the N-terminus, the 309-residue chain is Olfactory receptor 4A47 (309 aa).

Residues 1–23 (MEPRKNVTDFVLLGFTQNPKEQK) are Extracellular-facing. The N-linked (GlcNAc...) asparagine glycan is linked to Asn6. The chain crosses the membrane as a helical span at residues 24-47 (VLFVMFLLFYILTMVGNLLIVVTV). Residues 48-55 (TVSETLGS) lie on the Cytoplasmic side of the membrane. Residues 56–77 (PMYFFLAGLSFIDIIYSSSISP) form a helical membrane-spanning segment. The Extracellular segment spans residues 78-98 (RLISGLFFGNNSISFQSCMAQ). Asn87 is a glycosylation site (N-linked (GlcNAc...) asparagine). An intrachain disulfide couples Cys95 to Cys187. A helical membrane pass occupies residues 99-118 (LFIEHIFGGSEVFLLLVMAY). The Cytoplasmic segment spans residues 119 to 137 (DCYVAICKPLHYLVIMRQW). Residues 138 to 156 (VCVVLLVVSWVGGFLHSVF) form a helical membrane-spanning segment. Topologically, residues 157–193 (QLSIIYGLPFCGPNVIDHFFCDMYPLLKLVCTDTHAI) are extracellular. Residues 194–217 (GLLVVANGGLACTIVFLLLLISYG) traverse the membrane as a helical segment. Residues 218–233 (VILHSLKNLSQKGRQK) lie on the Cytoplasmic side of the membrane. A helical transmembrane segment spans residues 234–256 (ALSTCSSHMTVVVFFFVPCIFMY). Residues 257-267 (ARPARTFPIDK) lie on the Extracellular side of the membrane. A helical membrane pass occupies residues 268 to 287 (SVSVFYTVITPMLNPLIYTL). Topologically, residues 288-309 (RNSEMTSAMKKLWRRDLISSST) are cytoplasmic.

It belongs to the G-protein coupled receptor 1 family.

The protein resides in the cell membrane. Odorant receptor. The protein is Olfactory receptor 4A47 (OR4A47) of Homo sapiens (Human).